The chain runs to 246 residues: Octanoyltransferase (246 aa).

In terms of domain architecture, BPL/LPL catalytic spans 46 to 234 (GTAGEMVWLV…AFEEVFGAAE (189 aa)). Substrate contacts are provided by residues 85–92 (RGGEYTYH), 165–167 (AIG), and 178–180 (GIA). Residue Cys196 is the Acyl-thioester intermediate of the active site.

It belongs to the LipB family.

The protein resides in the cytoplasm. It carries out the reaction octanoyl-[ACP] + L-lysyl-[protein] = N(6)-octanoyl-L-lysyl-[protein] + holo-[ACP] + H(+). It participates in protein modification; protein lipoylation via endogenous pathway; protein N(6)-(lipoyl)lysine from octanoyl-[acyl-carrier-protein]: step 1/2. Its function is as follows. Catalyzes the transfer of endogenously produced octanoic acid from octanoyl-acyl-carrier-protein onto the lipoyl domains of lipoate-dependent enzymes. Lipoyl-ACP can also act as a substrate although octanoyl-ACP is likely to be the physiological substrate. In Chelativorans sp. (strain BNC1), this protein is Octanoyltransferase.